A 363-amino-acid chain; its full sequence is 3-isopropylmalate dehydrogenase (363 aa).

Glycine 79–glutamate 92 contacts NAD(+). The substrate site is built by arginine 100, arginine 110, arginine 139, and aspartate 228. Aspartate 228, aspartate 252, and aspartate 256 together coordinate Mg(2+). NAD(+) is bound at residue glycine 286–asparagine 298.

This sequence belongs to the isocitrate and isopropylmalate dehydrogenases family. LeuB type 1 subfamily. As to quaternary structure, homodimer. Mg(2+) is required as a cofactor. It depends on Mn(2+) as a cofactor.

It localises to the cytoplasm. The catalysed reaction is (2R,3S)-3-isopropylmalate + NAD(+) = 4-methyl-2-oxopentanoate + CO2 + NADH. It functions in the pathway amino-acid biosynthesis; L-leucine biosynthesis; L-leucine from 3-methyl-2-oxobutanoate: step 3/4. Its function is as follows. Catalyzes the oxidation of 3-carboxy-2-hydroxy-4-methylpentanoate (3-isopropylmalate) to 3-carboxy-4-methyl-2-oxopentanoate. The product decarboxylates to 4-methyl-2 oxopentanoate. The chain is 3-isopropylmalate dehydrogenase from Vibrio vulnificus (strain CMCP6).